Here is a 255-residue protein sequence, read N- to C-terminus: Small ribosomal subunit protein eS1 (255 aa).

Residues 1 to 18 (MAVGKNKRLSKGKKGLKK) are compositionally biased toward basic residues. Positions 1 to 28 (MAVGKNKRLSKGKKGLKKRTQDPFSRKD) are disordered. Alanine 2 bears the N-acetylalanine; partial mark. The segment covering 19–28 (RTQDPFSRKD) has biased composition (basic and acidic residues).

It belongs to the eukaryotic ribosomal protein eS1 family. As to quaternary structure, component of the small ribosomal subunit. Mature ribosomes consist of a small (40S) and a large (60S) subunit. The 40S subunit contains about 33 different proteins and 1 molecule of RNA (18S). The 60S subunit contains about 49 different proteins and 3 molecules of RNA (25S, 5.8S and 5S).

It localises to the cytoplasm. In Ajellomyces capsulatus (strain NAm1 / WU24) (Darling's disease fungus), this protein is Small ribosomal subunit protein eS1.